A 426-amino-acid polypeptide reads, in one-letter code: Serine--tRNA ligase (426 aa).

The disordered stretch occupies residues 44-67 (TEKQALQSERNATSKQIGMLKKKG). The segment covering 47–59 (QALQSERNATSKQ) has biased composition (polar residues). Position 231 to 233 (231 to 233 (TAE)) interacts with L-serine. ATP is bound by residues 262 to 264 (RRE) and V278. L-serine is bound at residue E285. Position 349–352 (349–352 (EVSS)) interacts with ATP. S384 is a binding site for L-serine.

The protein belongs to the class-II aminoacyl-tRNA synthetase family. Type-1 seryl-tRNA synthetase subfamily. In terms of assembly, homodimer. The tRNA molecule binds across the dimer.

It localises to the cytoplasm. The catalysed reaction is tRNA(Ser) + L-serine + ATP = L-seryl-tRNA(Ser) + AMP + diphosphate + H(+). It catalyses the reaction tRNA(Sec) + L-serine + ATP = L-seryl-tRNA(Sec) + AMP + diphosphate + H(+). It functions in the pathway aminoacyl-tRNA biosynthesis; selenocysteinyl-tRNA(Sec) biosynthesis; L-seryl-tRNA(Sec) from L-serine and tRNA(Sec): step 1/1. Its function is as follows. Catalyzes the attachment of serine to tRNA(Ser). Is also able to aminoacylate tRNA(Sec) with serine, to form the misacylated tRNA L-seryl-tRNA(Sec), which will be further converted into selenocysteinyl-tRNA(Sec). The chain is Serine--tRNA ligase from Akkermansia muciniphila (strain ATCC BAA-835 / DSM 22959 / JCM 33894 / BCRC 81048 / CCUG 64013 / CIP 107961 / Muc).